A 1049-amino-acid polypeptide reads, in one-letter code: Bifunctional cytochrome P450/NADPH--P450 reductase (1049 aa).

The segment at 2–472 (TIKEMPQPKT…STEQSAKKVR (471 aa)) is cytochrome P450. Tyrosine 52 is a binding site for (9Z)-hexadecenoate. Cysteine 401 serves as a coordination point for heme. The NADPH--P450 reductase stretch occupies residues 473 to 1049 (KKAENAHNTP…GRYAKDVWAG (577 aa)). The Flavodoxin-like domain maps to 483–622 (LLVLYGSNMG…TYEEWREHMW (140 aa)). FMN is bound by residues 489-494 (SNMGTA), 536-539 (SYNG), 570-572 (CGD), and 578-580 (TYQ). The FAD-binding FR-type domain maps to 660-892 (HGAFSTNVVA…STPQSEFTLP (233 aa)).

In the N-terminal section; belongs to the cytochrome P450 family. The cofactor is FAD. FMN serves as cofactor. Heme is required as a cofactor.

Its subcellular location is the cytoplasm. The catalysed reaction is 2 oxidized [cytochrome P450] + NADPH = 2 reduced [cytochrome P450] + NADP(+) + H(+). It carries out the reaction an organic molecule + reduced [NADPH--hemoprotein reductase] + O2 = an alcohol + oxidized [NADPH--hemoprotein reductase] + H2O + H(+). Its activity is regulated as follows. Inhibited by N-(12-imidazolyl-dodecanoyl)-L-leucine. In terms of biological role, functions as a fatty acid monooxygenase. Catalyzes hydroxylation of fatty acids at omega-1, omega-2 and omega-3 positions. Shows activity toward medium and long-chain fatty acids, with optimum chain lengths of 12, 14 and 16 carbons (lauric, myristic, and palmitic acids). Able to metabolize some of these primary metabolites to secondary and tertiary products. Marginal activity towards short chain lengths of 8-10 carbons. Hydroxylates highly branched fatty acids, which play an essential role in membrane fluidity regulation. Also displays a NADPH-dependent reductase activity in the C-terminal domain, which allows electron transfer from NADPH to the heme iron of the cytochrome P450 N-terminal domain. Involved in inactivation of quorum sensing signals of other competing bacteria by oxidazing efficiently acyl homoserine lactones (AHLs), molecules involved in quorum sensing signaling pathways, and their lactonolysis products acyl homoserines (AHs). The sequence is that of Bifunctional cytochrome P450/NADPH--P450 reductase from Priestia megaterium (strain ATCC 14581 / DSM 32 / CCUG 1817 / JCM 2506 / NBRC 15308 / NCIMB 9376 / NCTC 10342 / NRRL B-14308 / VKM B-512 / Ford 19) (Bacillus megaterium).